A 247-amino-acid chain; its full sequence is Cytochrome c oxidase subunit 2 (247 aa).

At 1-38 the chain is on the mitochondrial intermembrane side; that stretch reads MKEMMMSNMFNDVPTPWAMFFQDSATPNMEGMLELHNN. The helical transmembrane segment at 39 to 58 threads the bilayer; the sequence is VVFYLCMMLGFVTFMLYNML. At 59 to 78 the chain is on the mitochondrial matrix side; that stretch reads TTYNKSVMPYKYLNQGQFME. A helical membrane pass occupies residues 79–103; it reads MMWTTLPAVMLLMIAFPSFILLYMC. Topologically, residues 104–247 are mitochondrial intermembrane; that stretch reads DEVMAPAMTI…ADFLAWIDEQ (144 aa). The Cu cation site is built by His-182, Cys-217, Glu-219, Cys-221, His-225, and Met-228. Glu-219 contacts Mg(2+).

This sequence belongs to the cytochrome c oxidase subunit 2 family. As to quaternary structure, component of the cytochrome c oxidase (complex IV, CIV), a multisubunit enzyme composed of a catalytic core of 3 subunits and several supernumerary subunits. The complex exists as a monomer or a dimer and forms supercomplexes (SCs) in the inner mitochondrial membrane with ubiquinol-cytochrome c oxidoreductase (cytochrome b-c1 complex, complex III, CIII). The cofactor is Cu cation.

It localises to the mitochondrion inner membrane. It carries out the reaction 4 Fe(II)-[cytochrome c] + O2 + 8 H(+)(in) = 4 Fe(III)-[cytochrome c] + 2 H2O + 4 H(+)(out). Component of the cytochrome c oxidase, the last enzyme in the mitochondrial electron transport chain which drives oxidative phosphorylation. The respiratory chain contains 3 multisubunit complexes succinate dehydrogenase (complex II, CII), ubiquinol-cytochrome c oxidoreductase (cytochrome b-c1 complex, complex III, CIII) and cytochrome c oxidase (complex IV, CIV), that cooperate to transfer electrons derived from NADH and succinate to molecular oxygen, creating an electrochemical gradient over the inner membrane that drives transmembrane transport and the ATP synthase. Cytochrome c oxidase is the component of the respiratory chain that catalyzes the reduction of oxygen to water. Electrons originating from reduced cytochrome c in the intermembrane space (IMS) are transferred via the dinuclear copper A center (CU(A)) of subunit 2 and heme A of subunit 1 to the active site in subunit 1, a binuclear center (BNC) formed by heme A3 and copper B (CU(B)). The BNC reduces molecular oxygen to 2 water molecules using 4 electrons from cytochrome c in the IMS and 4 protons from the mitochondrial matrix. The polypeptide is Cytochrome c oxidase subunit 2 (COX2) (Brettanomyces custersianus (Yeast)).